A 278-amino-acid polypeptide reads, in one-letter code: MTIYRFFKRSAFTLAYIYRRFHEEGCAYRATALAYTTLLALVPLTIVAFTLLSFVPAFQGVGVRLQNLIWENFVPTSAGMVAAYLSQLTQNVTGLSIINIFFLGIVALLLMYNINRAFVAIWHTEHHFRLSLHFLIYFMVLLLSPFLLGAVMLLGTFLVQSPLVTDLIGWPYLGKGLLFVLPYVLIFITFTLFNWVLPSAKVKLSHAVIGGLVTTVLFELAKFAFTVYLKFFPTYRVIYGALSVIPIFLVWLYVSWTIILLGAVVSNVIACGIPEKYK.

A run of 7 helical transmembrane segments spans residues 38–58 (LLAL…VPAF), 68–88 (LIWE…LSQL), 92–112 (VTGL…LLMY), 134–154 (FLIY…VMLL), 177–197 (LLFV…NWVL), 207–227 (AVIG…AFTV), and 244–264 (VIPI…LGAV).

This sequence belongs to the UPF0761 family.

Its subcellular location is the cell inner membrane. The protein is UPF0761 membrane protein CBU_1578 of Coxiella burnetii (strain RSA 493 / Nine Mile phase I).